The following is a 257-amino-acid chain: Receptor expression-enhancing protein 4 (257 aa).

2 helical membrane-spanning segments follow: residues 1 to 21 (MVSW…YPAY) and 42 to 62 (WIVF…ISWF). 2 positions are modified to phosphoserine: serine 152 and serine 194. Positions 159 to 257 (IPDTSAPTYQ…KKTIPSDLDS (99 aa)) are disordered. The residue at position 196 (threonine 196) is a Phosphothreonine. At serine 202 the chain carries Phosphoserine. Position 250 is a phosphothreonine (threonine 250). Serine 253 is modified (phosphoserine).

Belongs to the DP1 family.

It localises to the endoplasmic reticulum membrane. Functionally, microtubule-binding protein required to ensure proper cell division and nuclear envelope reassembly by sequestering the endoplasmic reticulum away from chromosomes during mitosis. Probably acts by clearing the endoplasmic reticulum membrane from metaphase chromosomes. In Rattus norvegicus (Rat), this protein is Receptor expression-enhancing protein 4 (Reep4).